Consider the following 296-residue polypeptide: Light-independent protochlorophyllide reductase iron-sulfur ATP-binding protein (296 aa).

Residues 39-44 (GIGKST) and lysine 68 contribute to the ATP site. A Mg(2+)-binding site is contributed by serine 43. [4Fe-4S] cluster contacts are provided by cysteine 124 and cysteine 158. 209–210 (NR) contributes to the ATP binding site.

The protein belongs to the NifH/BchL/ChlL family. In terms of assembly, homodimer. Protochlorophyllide reductase is composed of three subunits; ChlL, ChlN and ChlB. Requires [4Fe-4S] cluster as cofactor.

It catalyses the reaction chlorophyllide a + oxidized 2[4Fe-4S]-[ferredoxin] + 2 ADP + 2 phosphate = protochlorophyllide a + reduced 2[4Fe-4S]-[ferredoxin] + 2 ATP + 2 H2O. It functions in the pathway porphyrin-containing compound metabolism; chlorophyll biosynthesis (light-independent). Component of the dark-operative protochlorophyllide reductase (DPOR) that uses Mg-ATP and reduced ferredoxin to reduce ring D of protochlorophyllide (Pchlide) to form chlorophyllide a (Chlide). This reaction is light-independent. The L component serves as a unique electron donor to the NB-component of the complex, and binds Mg-ATP. In Prochlorococcus marinus (strain MIT 9313), this protein is Light-independent protochlorophyllide reductase iron-sulfur ATP-binding protein.